The following is a 270-amino-acid chain: Putative phosphoenolpyruvate synthase regulatory protein (270 aa).

Residue 150-157 (GVSRCGKT) coordinates ADP.

The protein belongs to the pyruvate, phosphate/water dikinase regulatory protein family. PSRP subfamily.

The catalysed reaction is [pyruvate, water dikinase] + ADP = [pyruvate, water dikinase]-phosphate + AMP + H(+). The enzyme catalyses [pyruvate, water dikinase]-phosphate + phosphate + H(+) = [pyruvate, water dikinase] + diphosphate. Bifunctional serine/threonine kinase and phosphorylase involved in the regulation of the phosphoenolpyruvate synthase (PEPS) by catalyzing its phosphorylation/dephosphorylation. In Shewanella putrefaciens (strain CN-32 / ATCC BAA-453), this protein is Putative phosphoenolpyruvate synthase regulatory protein.